A 275-amino-acid polypeptide reads, in one-letter code: Nitrogenase iron protein 1 (275 aa).

9-16 provides a ligand contact to ATP; that stretch reads GKGGIGKS. A [4Fe-4S] cluster-binding site is contributed by Cys97. At Arg100 the chain carries ADP-ribosylarginine; by dinitrogenase reductase ADP-ribosyltransferase. Cys132 provides a ligand contact to [4Fe-4S] cluster.

It belongs to the NifH/BchL/ChlL family. In terms of assembly, homodimer. It depends on [4Fe-4S] cluster as a cofactor. In terms of processing, the reversible ADP-ribosylation of Arg-100 inactivates the nitrogenase reductase and regulates nitrogenase activity.

It catalyses the reaction N2 + 8 reduced [2Fe-2S]-[ferredoxin] + 16 ATP + 16 H2O = H2 + 8 oxidized [2Fe-2S]-[ferredoxin] + 2 NH4(+) + 16 ADP + 16 phosphate + 6 H(+). In terms of biological role, the key enzymatic reactions in nitrogen fixation are catalyzed by the nitrogenase complex, which has 2 components: the iron protein and the molybdenum-iron protein. The chain is Nitrogenase iron protein 1 (nifH1) from Methanosarcina barkeri.